Here is a 1051-residue protein sequence, read N- to C-terminus: Inactive tyrosine-protein kinase 7 (1051 aa).

The N-terminal stretch at Met-1–Ala-22 is a signal peptide. 7 consecutive Ig-like C2-type domains span residues Lys-23–Ser-105, Ser-115–Thr-204, Pro-213–Leu-298, Pro-308–Thr-388, Pro-393–Glu-472, Pro-487–Gln-566, and Val-573–Tyr-661. Over Lys-23 to Thr-685 the chain is Extracellular. A disulfide bridge links Cys-40 with Cys-88. N-linked (GlcNAc...) asparagine glycosylation occurs at Asn-103. Cys-137 and Cys-187 are oxidised to a cystine. Residues Asn-202, Asn-255, and Asn-264 are each glycosylated (N-linked (GlcNAc...) asparagine). 5 cysteine pairs are disulfide-bonded: Cys-234-Cys-282, Cys-326-Cys-372, Cys-414-Cys-462, Cys-505-Cys-551, and Cys-594-Cys-645. N-linked (GlcNAc...) asparagine glycans are attached at residues Asn-444, Asn-548, and Asn-627. The helical transmembrane segment at Ile-686–Tyr-706 threads the bilayer. Residues Cys-707–Ala-1051 are Cytoplasmic-facing. In terms of domain architecture, Protein kinase; inactive spans Leu-777–Asp-1048.

Belongs to the protein kinase superfamily. Tyr protein kinase family. Insulin receptor subfamily. As to expression, expressed in bone marrow, spleen, bursa, thymus and brain. Weakly expressed in fibroblasts. Also expressed in embryonic liver.

The protein resides in the membrane. Functionally, inactive tyrosine kinase involved in Wnt signaling. pathway. This chain is Inactive tyrosine-protein kinase 7 (PTK7), found in Gallus gallus (Chicken).